A 510-amino-acid polypeptide reads, in one-letter code: 2,3-bisphosphoglycerate-independent phosphoglycerate mutase (510 aa).

Mn(2+) is bound by residues Asp-13 and Ser-63. The Phosphoserine intermediate role is filled by Ser-63. Substrate contacts are provided by residues His-124, 154-155 (RD), Arg-186, Arg-192, 262-265 (RADR), and Lys-334. Positions 401, 405, 442, 443, and 461 each coordinate Mn(2+).

The protein belongs to the BPG-independent phosphoglycerate mutase family. In terms of assembly, monomer. Mn(2+) serves as cofactor.

It catalyses the reaction (2R)-2-phosphoglycerate = (2R)-3-phosphoglycerate. It participates in carbohydrate degradation; glycolysis; pyruvate from D-glyceraldehyde 3-phosphate: step 3/5. Catalyzes the interconversion of 2-phosphoglycerate and 3-phosphoglycerate. The sequence is that of 2,3-bisphosphoglycerate-independent phosphoglycerate mutase from Vibrio campbellii (strain ATCC BAA-1116).